The following is a 302-amino-acid chain: 4-hydroxy-tetrahydrodipicolinate synthase (302 aa).

Threonine 46 provides a ligand contact to pyruvate. Tyrosine 135 serves as the catalytic Proton donor/acceptor. Lysine 164 functions as the Schiff-base intermediate with substrate in the catalytic mechanism. Valine 206 serves as a coordination point for pyruvate.

This sequence belongs to the DapA family. Homotetramer; dimer of dimers.

The protein resides in the cytoplasm. It catalyses the reaction L-aspartate 4-semialdehyde + pyruvate = (2S,4S)-4-hydroxy-2,3,4,5-tetrahydrodipicolinate + H2O + H(+). It functions in the pathway amino-acid biosynthesis; L-lysine biosynthesis via DAP pathway; (S)-tetrahydrodipicolinate from L-aspartate: step 3/4. Functionally, catalyzes the condensation of (S)-aspartate-beta-semialdehyde [(S)-ASA] and pyruvate to 4-hydroxy-tetrahydrodipicolinate (HTPA). The polypeptide is 4-hydroxy-tetrahydrodipicolinate synthase (Acidobacterium capsulatum (strain ATCC 51196 / DSM 11244 / BCRC 80197 / JCM 7670 / NBRC 15755 / NCIMB 13165 / 161)).